We begin with the raw amino-acid sequence, 263 residues long: Leukocyte-associated immunoglobulin-like receptor 1 (263 aa).

A signal peptide spans 1-21; the sequence is MSLHPVILLVLVLCLGWKINT. Residues 22–144 are Extracellular-facing; that stretch reads QEGSLPDITI…TSWLKTYSIY (123 aa). Residues 27 to 115 form the Ig-like C2-type domain; the sequence is PDITIFPNSS…TWSERSKTLE (89 aa). Residues Asn-34 and Asn-90 are each glycosylated (N-linked (GlcNAc...) asparagine). Cys-49 and Cys-99 are disulfide-bonded. The chain crosses the membrane as a helical span at residues 145–165; sequence IFTVVSVIFLLCLSALLFCFL. The Cytoplasmic segment spans residues 166-263; sequence RHRQKKQGLP…SSTYAAIIRH (98 aa). 2 consecutive short sequence motifs (ITIM motif) follow at residues 226–231 and 255–260; these read VTYIQL and STYAAI. 2 positions are modified to phosphotyrosine: Tyr-228 and Tyr-257.

Interacts with SH2 domains of tyrosine-protein phosphatases PTPN6 and PTPN11. The interaction with PTPN6 is constitutive. Interacts with the SH2 domain of CSK. Binds with high affinity to extracellular matrix collagens, the interaction is functionally important. Post-translationally, phosphorylation at Tyr-228 and Tyr-257 activates it. May be phosphorylated by LCK. In terms of processing, N-glycosylated. Expressed in lymphoid organs and in cell lines of hemopoietic origin.

It localises to the cell membrane. In terms of biological role, functions as an inhibitory receptor that plays a constitutive negative regulatory role on cytolytic function of natural killer (NK) cells, B-cells and T-cells. Activation by Tyr phosphorylation results in recruitment and activation of the phosphatases PTPN6 and PTPN11. It also reduces the increase of intracellular calcium evoked by B-cell receptor ligation. May also play its inhibitory role independently of SH2-containing phosphatases. Modulates cytokine production in CD4+ T-cells, down-regulating IL2 and IFNG production while inducing secretion of transforming growth factor beta. Also down-regulates IgG and IgE production in B-cells as well as IL8, IL10 and TNF secretion. Inhibits proliferation and induces apoptosis in myeloid leukemia cell lines as well as prevents nuclear translocation of NF-kappa-B p65 subunit/RELA and phosphorylation of I-kappa-B alpha/CHUK in these cells. Inhibits the differentiation of peripheral blood precursors towards dendritic cells. The protein is Leukocyte-associated immunoglobulin-like receptor 1 (Lair1) of Mus musculus (Mouse).